The sequence spans 93 residues: Small ribosomal subunit protein uS19 (93 aa).

It belongs to the universal ribosomal protein uS19 family.

Its function is as follows. Protein S19 forms a complex with S13 that binds strongly to the 16S ribosomal RNA. The protein is Small ribosomal subunit protein uS19 of Tropheryma whipplei (strain TW08/27) (Whipple's bacillus).